A 353-amino-acid polypeptide reads, in one-letter code: Photosystem II D2 protein (353 aa).

Threonine 2 is subject to N-acetylthreonine. Threonine 2 carries the post-translational modification Phosphothreonine. A helical membrane pass occupies residues 41–61 (CAYFALGGWFTGTTFVTSWYT). Histidine 118 contributes to the chlorophyll a binding site. The helical transmembrane segment at 125 to 141 (GFMLRQFELARSVQLRP) threads the bilayer. Pheophytin a-binding residues include glutamine 130 and asparagine 143. Residues 153–166 (VFVSVSLIYPLGQA) traverse the membrane as a helical segment. Residue histidine 198 participates in chlorophyll a binding. Residues 208–228 (AALLCAIHGATVENTLFEDGD) traverse the membrane as a helical segment. A plastoquinone-binding residues include histidine 215 and phenylalanine 262. Histidine 215 contributes to the Fe cation binding site. Residue histidine 269 coordinates Fe cation. The helical transmembrane segment at 279–295 (GLWMSAIGVVGLALNLR) threads the bilayer.

It belongs to the reaction center PufL/M/PsbA/D family. In terms of assembly, PSII is composed of 1 copy each of membrane proteins PsbA, PsbB, PsbC, PsbD, PsbE, PsbF, PsbH, PsbI, PsbJ, PsbK, PsbL, PsbM, PsbT, PsbX, PsbY, PsbZ, Psb30/Ycf12, at least 3 peripheral proteins of the oxygen-evolving complex and a large number of cofactors. It forms dimeric complexes. Requires The D1/D2 heterodimer binds P680, chlorophylls that are the primary electron donor of PSII, and subsequent electron acceptors. It shares a non-heme iron and each subunit binds pheophytin, quinone, additional chlorophylls, carotenoids and lipids. There is also a Cl(-1) ion associated with D1 and D2, which is required for oxygen evolution. The PSII complex binds additional chlorophylls, carotenoids and specific lipids. as cofactor.

The protein resides in the plastid. Its subcellular location is the chloroplast thylakoid membrane. It catalyses the reaction 2 a plastoquinone + 4 hnu + 2 H2O = 2 a plastoquinol + O2. In terms of biological role, photosystem II (PSII) is a light-driven water:plastoquinone oxidoreductase that uses light energy to abstract electrons from H(2)O, generating O(2) and a proton gradient subsequently used for ATP formation. It consists of a core antenna complex that captures photons, and an electron transfer chain that converts photonic excitation into a charge separation. The D1/D2 (PsbA/PsbD) reaction center heterodimer binds P680, the primary electron donor of PSII as well as several subsequent electron acceptors. D2 is needed for assembly of a stable PSII complex. This chain is Photosystem II D2 protein, found in Angiopteris evecta (Mule's foot fern).